A 75-amino-acid polypeptide reads, in one-letter code: MLNNNVVYLGYPGLPPNKLEGLMLELRTVGPSFGLEFRFQDTPRRGKNYTQMHILKQRFKTRAFVMHYKPRKEKF.

This is an uncharacterized protein from Escherichia coli (Bacteriophage T4).